Here is a 72-residue protein sequence, read N- to C-terminus: ATP synthase subunit c (72 aa).

Helical transmembrane passes span 1–21 (MSLG…GAGI) and 48–68 (MFIG…FSFI).

This sequence belongs to the ATPase C chain family. F-type ATPases have 2 components, F(1) - the catalytic core - and F(0) - the membrane proton channel. F(1) has five subunits: alpha(3), beta(3), gamma(1), delta(1), epsilon(1). F(0) has three main subunits: a(1), b(2) and c(10-14). The alpha and beta chains form an alternating ring which encloses part of the gamma chain. F(1) is attached to F(0) by a central stalk formed by the gamma and epsilon chains, while a peripheral stalk is formed by the delta and b chains.

Its subcellular location is the cell membrane. Functionally, f(1)F(0) ATP synthase produces ATP from ADP in the presence of a proton or sodium gradient. F-type ATPases consist of two structural domains, F(1) containing the extramembraneous catalytic core and F(0) containing the membrane proton channel, linked together by a central stalk and a peripheral stalk. During catalysis, ATP synthesis in the catalytic domain of F(1) is coupled via a rotary mechanism of the central stalk subunits to proton translocation. Its function is as follows. Key component of the F(0) channel; it plays a direct role in translocation across the membrane. A homomeric c-ring of between 10-14 subunits forms the central stalk rotor element with the F(1) delta and epsilon subunits. This is ATP synthase subunit c from Bacillus caldotenax.